A 356-amino-acid chain; its full sequence is Holliday junction branch migration complex subunit RuvB (356 aa).

Polar residues predominate over residues 1–14 (MAIVSSITNHSSLP). Residues 1 to 20 (MAIVSSITNHSSLPNDKGEE) are disordered. Residues 13–201 (LPNDKGEERL…FGITQRLDFY (189 aa)) form a large ATPase domain (RuvB-L) region. ATP is bound by residues leucine 40, arginine 41, glycine 82, lysine 85, threonine 86, threonine 87, arginine 191, tyrosine 201, and arginine 238. A Mg(2+)-binding site is contributed by threonine 86. A small ATPAse domain (RuvB-S) region spans residues 202–273 (NYLDLENIIK…VVNDALDLHR (72 aa)). The interval 276-356 (QRGLDATDRS…LLTSPNNIDK (81 aa)) is head domain (RuvB-H). DNA is bound by residues arginine 331 and arginine 336.

This sequence belongs to the RuvB family. In terms of assembly, homohexamer. Forms an RuvA(8)-RuvB(12)-Holliday junction (HJ) complex. HJ DNA is sandwiched between 2 RuvA tetramers; dsDNA enters through RuvA and exits via RuvB. An RuvB hexamer assembles on each DNA strand where it exits the tetramer. Each RuvB hexamer is contacted by two RuvA subunits (via domain III) on 2 adjacent RuvB subunits; this complex drives branch migration. In the full resolvosome a probable DNA-RuvA(4)-RuvB(12)-RuvC(2) complex forms which resolves the HJ.

It is found in the cytoplasm. The enzyme catalyses ATP + H2O = ADP + phosphate + H(+). In terms of biological role, the RuvA-RuvB-RuvC complex processes Holliday junction (HJ) DNA during genetic recombination and DNA repair, while the RuvA-RuvB complex plays an important role in the rescue of blocked DNA replication forks via replication fork reversal (RFR). RuvA specifically binds to HJ cruciform DNA, conferring on it an open structure. The RuvB hexamer acts as an ATP-dependent pump, pulling dsDNA into and through the RuvAB complex. RuvB forms 2 homohexamers on either side of HJ DNA bound by 1 or 2 RuvA tetramers; 4 subunits per hexamer contact DNA at a time. Coordinated motions by a converter formed by DNA-disengaged RuvB subunits stimulates ATP hydrolysis and nucleotide exchange. Immobilization of the converter enables RuvB to convert the ATP-contained energy into a lever motion, pulling 2 nucleotides of DNA out of the RuvA tetramer per ATP hydrolyzed, thus driving DNA branch migration. The RuvB motors rotate together with the DNA substrate, which together with the progressing nucleotide cycle form the mechanistic basis for DNA recombination by continuous HJ branch migration. Branch migration allows RuvC to scan DNA until it finds its consensus sequence, where it cleaves and resolves cruciform DNA. This chain is Holliday junction branch migration complex subunit RuvB, found in Prochlorococcus marinus (strain NATL2A).